Here is an 88-residue protein sequence, read N- to C-terminus: Small ribosomal subunit protein uS15 (88 aa).

This sequence belongs to the universal ribosomal protein uS15 family. In terms of assembly, part of the 30S ribosomal subunit. Forms a bridge to the 50S subunit in the 70S ribosome, contacting the 23S rRNA.

In terms of biological role, one of the primary rRNA binding proteins, it binds directly to 16S rRNA where it helps nucleate assembly of the platform of the 30S subunit by binding and bridging several RNA helices of the 16S rRNA. Forms an intersubunit bridge (bridge B4) with the 23S rRNA of the 50S subunit in the ribosome. This is Small ribosomal subunit protein uS15 from Mycoplasmopsis agalactiae (strain NCTC 10123 / CIP 59.7 / PG2) (Mycoplasma agalactiae).